The chain runs to 660 residues: UvrABC system protein B (660 aa).

Positions 26-196 (DGIDEKKEHQ…ELNKGQFDVK (171 aa)) constitute a Helicase ATP-binding domain. 39 to 46 (GVTGSGKT) contacts ATP. The Beta-hairpin motif lies at 92–115 (YFDFYKPEAYIPKSDLYIEKTSKN). A Helicase C-terminal domain is found at 431 to 593 (QIEDIYDHLK…IIPKTIVKPI (163 aa)). Residues 622–657 (KKFIDQMVRKMTQLAKANKFEEAIEIRDYLIEIGIE) enclose the UVR domain.

Belongs to the UvrB family. As to quaternary structure, forms a heterotetramer with UvrA during the search for lesions. Interacts with UvrC in an incision complex.

It localises to the cytoplasm. Its function is as follows. The UvrABC repair system catalyzes the recognition and processing of DNA lesions. A damage recognition complex composed of 2 UvrA and 2 UvrB subunits scans DNA for abnormalities. Upon binding of the UvrA(2)B(2) complex to a putative damaged site, the DNA wraps around one UvrB monomer. DNA wrap is dependent on ATP binding by UvrB and probably causes local melting of the DNA helix, facilitating insertion of UvrB beta-hairpin between the DNA strands. Then UvrB probes one DNA strand for the presence of a lesion. If a lesion is found the UvrA subunits dissociate and the UvrB-DNA preincision complex is formed. This complex is subsequently bound by UvrC and the second UvrB is released. If no lesion is found, the DNA wraps around the other UvrB subunit that will check the other stand for damage. This is UvrABC system protein B from Metamycoplasma arthritidis (strain 158L3-1) (Mycoplasma arthritidis).